Consider the following 143-residue polypeptide: Deoxyuridine 5'-triphosphate nucleotidohydrolase (143 aa).

Residues 63 to 65 (RSG), Asn76, 80 to 82 (TID), and Lys90 each bind substrate.

Belongs to the dUTPase family. Mg(2+) is required as a cofactor.

The catalysed reaction is dUTP + H2O = dUMP + diphosphate + H(+). The protein operates within pyrimidine metabolism; dUMP biosynthesis; dUMP from dCTP (dUTP route): step 2/2. Its function is as follows. This enzyme is involved in nucleotide metabolism: it produces dUMP, the immediate precursor of thymidine nucleotides and it decreases the intracellular concentration of dUTP so that uracil cannot be incorporated into DNA. This is Deoxyuridine 5'-triphosphate nucleotidohydrolase from Clostridioides difficile (Peptoclostridium difficile).